Reading from the N-terminus, the 471-residue chain is Glutamate--tRNA ligase (471 aa).

Positions 9 to 19 (PSPTGYLHVGG) match the 'HIGH' region motif. Zn(2+) is bound by residues Cys-98, Cys-100, Cys-125, and His-127. The short motif at 237–241 (KLSKR) is the 'KMSKS' region element. Lys-240 is a binding site for ATP.

The protein belongs to the class-I aminoacyl-tRNA synthetase family. Glutamate--tRNA ligase type 1 subfamily. In terms of assembly, monomer. Zn(2+) is required as a cofactor.

Its subcellular location is the cytoplasm. It carries out the reaction tRNA(Glu) + L-glutamate + ATP = L-glutamyl-tRNA(Glu) + AMP + diphosphate. Its function is as follows. Catalyzes the attachment of glutamate to tRNA(Glu) in a two-step reaction: glutamate is first activated by ATP to form Glu-AMP and then transferred to the acceptor end of tRNA(Glu). The protein is Glutamate--tRNA ligase of Salmonella schwarzengrund (strain CVM19633).